The sequence spans 118 residues: Holo-[acyl-carrier-protein] synthase (118 aa).

Positions 8 and 58 each coordinate Mg(2+).

The protein belongs to the P-Pant transferase superfamily. AcpS family. It depends on Mg(2+) as a cofactor.

It localises to the cytoplasm. The enzyme catalyses apo-[ACP] + CoA = holo-[ACP] + adenosine 3',5'-bisphosphate + H(+). Its function is as follows. Transfers the 4'-phosphopantetheine moiety from coenzyme A to a Ser of acyl-carrier-protein. The polypeptide is Holo-[acyl-carrier-protein] synthase (Streptococcus uberis (strain ATCC BAA-854 / 0140J)).